The primary structure comprises 65 residues: MPKIKTLQAASKRFKITALGKYKYKHANMRHILTKKSTKHKRHLRQKSILPKIYLTTIMKYLPYI.

Belongs to the bacterial ribosomal protein bL35 family.

This chain is Large ribosomal subunit protein bL35, found in Blochmanniella pennsylvanica (strain BPEN).